The sequence spans 88 residues: Cell division topological specificity factor (88 aa).

This sequence belongs to the MinE family.

In terms of biological role, prevents the cell division inhibition by proteins MinC and MinD at internal division sites while permitting inhibition at polar sites. This ensures cell division at the proper site by restricting the formation of a division septum at the midpoint of the long axis of the cell. The protein is Cell division topological specificity factor of Carboxydothermus hydrogenoformans (strain ATCC BAA-161 / DSM 6008 / Z-2901).